Consider the following 548-residue polypeptide: Chaperonin GroEL (548 aa).

Residues 30–33, Lys-51, 87–91, Gly-415, 479–481, and Asp-495 each bind ATP; these read TLGP, DGTTT, and NAA. Residues 524-548 are disordered; that stretch reads LPKEDKSSDSSSSPAGGMGGMGGMM. Residues 539–548 show a composition bias toward gly residues; sequence GGMGGMGGMM.

Belongs to the chaperonin (HSP60) family. As to quaternary structure, forms a cylinder of 14 subunits composed of two heptameric rings stacked back-to-back. Interacts with the co-chaperonin GroES.

The protein localises to the cytoplasm. The catalysed reaction is ATP + H2O + a folded polypeptide = ADP + phosphate + an unfolded polypeptide.. Together with its co-chaperonin GroES, plays an essential role in assisting protein folding. The GroEL-GroES system forms a nano-cage that allows encapsulation of the non-native substrate proteins and provides a physical environment optimized to promote and accelerate protein folding. The protein is Chaperonin GroEL of Buchnera aphidicola subsp. Acyrthosiphon pisum (strain 5A).